Consider the following 438-residue polypeptide: Phospholipase D Y (438 aa).

An N-terminal signal peptide occupies residues 1–19 (MIINRLFIIIVLFFVNVNS). Residue Asn50 is glycosylated (N-linked (GlcNAc...) asparagine). The PLD phosphodiesterase 1 domain occupies 145–172 (GSGVLHTKLIIIDESSAYVGSANADWSS). Active-site residues include His150, Lys152, and Asp157. N-linked (GlcNAc...) asparagine glycans are attached at residues Asn223, Asn336, and Asn394. The region spanning 373–399 (YTRVNHAKFMVTEKQSYVGTSNWSQDY) is the PLD phosphodiesterase 2 domain.

It belongs to the phospholipase D family.

It carries out the reaction a 1,2-diacyl-sn-glycero-3-phosphocholine + H2O = a 1,2-diacyl-sn-glycero-3-phosphate + choline + H(+). Its activity is regulated as follows. Inhibited by butan-1-ol. Functionally, hydrolyzes membrane phospholipids, such as PtdCho (phosphatidylcholine), producing the free headgroup and PtdOH (phosphatidic acid; signaling molecule on its own). The sequence is that of Phospholipase D Y (pldY) from Dictyostelium discoideum (Social amoeba).